The chain runs to 349 residues: Core protein VP7 (349 aa).

Asn-287 is a glycosylation site (N-linked (GlcNAc...) asparagine; by host).

This sequence belongs to the orbivirus VP7 family. As to quaternary structure, homotrimer that assemble in a complex of 260 capsomers on an inner scaffold composed of VP3.

It is found in the virion. In terms of biological role, the VP7 protein is one of the five proteins (with VP1, VP3, VP4, and VP6) which form the inner capsid of the virus. The polypeptide is Core protein VP7 (Segment-7) (Bluetongue virus 1 (isolate Australia) (BTV 1)).